The primary structure comprises 155 residues: UPF0260 protein NGR_c07710 (155 aa).

Belongs to the UPF0260 family.

The sequence is that of UPF0260 protein NGR_c07710 from Sinorhizobium fredii (strain NBRC 101917 / NGR234).